We begin with the raw amino-acid sequence, 329 residues long: MGATGDAEQPRGPSGAERGGLELGDAGAAGQLVLTNPWNIMIKHRQVQRRGRRSQMTTSFTDPAISMDLLRAVLQPSINEEIQTVFNKYMKFFQKAALNVRDNVGEEVDAEQLIQEACRSCLEQAKLLFSDGEKVIPRLTHELPGIKRGRQAEEECAHRGSPLPKKRKGRPPGHILSSDRAAAGMVWKPKSCEPIRREGPKWDPARLNESTTFVLGSRANKALGMGGTRGRIYIKHPHLFKYAADPQDKHWLAEPHHMRATGGKMAYLLIEEDIRDLAASDDYRGCLDLKLEELKSFVLPSWMVEKMRKYMETLRTENEHRAVEAPPQT.

2 disordered regions span residues 1–22 and 147–178; these read MGATGDAEQPRGPSGAERGGLE and KRGRQAEEECAHRGSPLPKKRKGRPPGHILSS. Residues 56–147 are important for dimerization; it reads MTTSFTDPAI…RLTHELPGIK (92 aa). Basic and acidic residues predominate over residues 147–158; that stretch reads KRGRQAEEECAH. The segment at residues 159–173 is a DNA-binding region (a.T hook); sequence RGSPLPKKRKGRPPG. Serine 161 is modified (phosphoserine). The Nuclear localization signal signature appears at 164 to 170; the sequence is PKKRKGR. Residues 197 to 316 are important for DNA and nucleosome binding; the sequence is REGPKWDPAR…MRKYMETLRT (120 aa). The H-T-H motif DNA-binding region spans 216–237; that stretch reads GSRANKALGMGGTRGRIYIKHP.

In terms of assembly, monomer and homodimer. A minor proportion may form homotrimers. Interacts with ZNF541. Interacts with the terminal deoxynucleotidyltransferase DNTT. Interacts with TRERF1. Identified in a histone deacetylase complex that contains DNTTIP1, HDAC1 and MIDEAS; this complex assembles into a tetramer that contains four copies of each protein chain. Component of a histone deacetylase complex containing DNTTIP1, ZNF541, HDAC1 and HDAC2. Identified in a complex with KCTD19, HDAC1, HDAC2 and ZNF541.

Its subcellular location is the nucleus. Increases DNTT terminal deoxynucleotidyltransferase activity (in vitro). Also acts as a transcriptional regulator, binding to the consensus sequence 5'-GNTGCATG-3' following an AT-tract. Associates with RAB20 promoter and positively regulates its transcription. Binds DNA and nucleosomes; may recruit HDAC1 complexes to nucleosomes or naked DNA. This chain is Deoxynucleotidyltransferase terminal-interacting protein 1 (DNTTIP1), found in Pongo abelii (Sumatran orangutan).